Here is a 504-residue protein sequence, read N- to C-terminus: Anaerobic nitric oxide reductase transcription regulator NorR (504 aa).

4-aspartylphosphate is present on aspartate 57. Residues 187-416 (MIGLSPGMTQ…LEHAIHRAVV (230 aa)) form the Sigma-54 factor interaction domain. Residues 215 to 222 (GETGTGKE) and 278 to 287 (ADNGTLFLDE) contribute to the ATP site. The segment at residues 479–498 (WAACARMLETDVANLHRLAK) is a DNA-binding region (H-T-H motif).

The protein operates within nitrogen metabolism; nitric oxide reduction. Required for the expression of anaerobic nitric oxide (NO) reductase, acts as a transcriptional activator for at least the norVW operon. Activation also requires sigma-54. The protein is Anaerobic nitric oxide reductase transcription regulator NorR of Escherichia coli O81 (strain ED1a).